Here is a 306-residue protein sequence, read N- to C-terminus: ATP synthase gamma chain (306 aa).

The protein belongs to the ATPase gamma chain family. F-type ATPases have 2 components, CF(1) - the catalytic core - and CF(0) - the membrane proton channel. CF(1) has five subunits: alpha(3), beta(3), gamma(1), delta(1), epsilon(1). CF(0) has three main subunits: a, b and c.

It is found in the cell membrane. Functionally, produces ATP from ADP in the presence of a proton gradient across the membrane. The gamma chain is believed to be important in regulating ATPase activity and the flow of protons through the CF(0) complex. This chain is ATP synthase gamma chain, found in Bifidobacterium animalis subsp. lactis (strain AD011).